Here is a 185-residue protein sequence, read N- to C-terminus: ATP synthase subunit b 2 (185 aa).

Positions methionine 1–phenylalanine 25 are disordered. A helical transmembrane segment spans residues alanine 34–leucine 56.

The protein belongs to the ATPase B chain family. F-type ATPases have 2 components, F(1) - the catalytic core - and F(0) - the membrane proton channel. F(1) has five subunits: alpha(3), beta(3), gamma(1), delta(1), epsilon(1). F(0) has three main subunits: a(1), b(2) and c(10-14). The alpha and beta chains form an alternating ring which encloses part of the gamma chain. F(1) is attached to F(0) by a central stalk formed by the gamma and epsilon chains, while a peripheral stalk is formed by the delta and b chains.

It localises to the cell inner membrane. Its function is as follows. F(1)F(0) ATP synthase produces ATP from ADP in the presence of a proton or sodium gradient. F-type ATPases consist of two structural domains, F(1) containing the extramembraneous catalytic core and F(0) containing the membrane proton channel, linked together by a central stalk and a peripheral stalk. During catalysis, ATP synthesis in the catalytic domain of F(1) is coupled via a rotary mechanism of the central stalk subunits to proton translocation. In terms of biological role, component of the F(0) channel, it forms part of the peripheral stalk, linking F(1) to F(0). The b'-subunit is a diverged and duplicated form of b found in plants and photosynthetic bacteria. This is ATP synthase subunit b 2 (atpF2) from Nitrobacter winogradskyi (strain ATCC 25391 / DSM 10237 / CIP 104748 / NCIMB 11846 / Nb-255).